A 436-amino-acid chain; its full sequence is Glutamate-1-semialdehyde 2,1-aminomutase (436 aa).

Lysine 269 bears the N6-(pyridoxal phosphate)lysine mark.

It belongs to the class-III pyridoxal-phosphate-dependent aminotransferase family. HemL subfamily. Homodimer. Pyridoxal 5'-phosphate is required as a cofactor.

It is found in the cytoplasm. The catalysed reaction is (S)-4-amino-5-oxopentanoate = 5-aminolevulinate. It participates in porphyrin-containing compound metabolism; protoporphyrin-IX biosynthesis; 5-aminolevulinate from L-glutamyl-tRNA(Glu): step 2/2. The protein operates within porphyrin-containing compound metabolism; chlorophyll biosynthesis. This Heliobacterium modesticaldum (strain ATCC 51547 / Ice1) protein is Glutamate-1-semialdehyde 2,1-aminomutase.